The sequence spans 420 residues: MSFTTISVIGLGYIGLPTAAAFASRQKQVIGVDINQHAVDTINRGEIHIVEPALGNVVKMAVEGGFLRATTTPVEADAYLIAVPTPFKGDHDPDMAYVEAAAKSIAPVLKKGALVILESTSPVGATEQMAGWLAGMRPDLTFPQQAGEQADVNIAYCPERVLPGQVMVELIKNDRVIGGMTPVCSARASALYKIFLEGECVVTNSRTAEMCKLTENSFRDVNIAFANELSLICAEQGINVWELIRLANRHPRVNILQPGPGVGGHCIAVDPWFIVAQNPQQARLIRTAREVNDGKPHWVVDQVKAAVADCLAATDKRASEVKIACFGLAFKPNIDDLRESPAMGIAQSIARWHSGETLVVEPNIRQLPKKLDGLCTLAKLDAALAAADVLVMLVDHDEFKAIPGDAVHQRYVVDTKGVWR.

5 residues coordinate NAD(+): Tyr-13, Ile-14, Asp-33, Thr-85, and Thr-126. Arg-160, Val-161, Lys-212, Asn-216, Arg-219, His-250, Arg-252, and Gly-263 together coordinate UDP-N-acetyl-alpha-D-mannosaminouronate. Lys-212 functions as the Proton donor/acceptor in the catalytic mechanism. Cys-266 acts as the Nucleophile in catalysis. Residues Phe-330 and Lys-331 each contribute to the UDP-N-acetyl-alpha-D-mannosaminouronate site. An NAD(+)-binding site is contributed by Arg-338. Lys-416 serves as a coordination point for UDP-N-acetyl-alpha-D-mannosaminouronate.

This sequence belongs to the UDP-glucose/GDP-mannose dehydrogenase family. WecC subfamily. Homodimer.

The enzyme catalyses UDP-N-acetyl-alpha-D-mannosamine + 2 NAD(+) + H2O = UDP-N-acetyl-alpha-D-mannosaminouronate + 2 NADH + 3 H(+). The protein operates within bacterial outer membrane biogenesis; enterobacterial common antigen biosynthesis. Its function is as follows. Catalyzes the four-electron oxidation of UDP-N-acetyl-D-mannosamine (UDP-ManNAc), reducing NAD(+) and releasing UDP-N-acetylmannosaminuronic acid (UDP-ManNAcA). This is UDP-N-acetyl-D-mannosamine dehydrogenase from Salmonella typhi.